The following is a 289-amino-acid chain: Lipoyl synthase (289 aa).

[4Fe-4S] cluster contacts are provided by Cys33, Cys38, Cys44, Cys59, Cys63, Cys66, and Ser274. Residues 45-263 (FAGGTATFLI…SQGESELGFL (219 aa)) enclose the Radical SAM core domain.

This sequence belongs to the radical SAM superfamily. Lipoyl synthase family. It depends on [4Fe-4S] cluster as a cofactor.

It localises to the cytoplasm. The catalysed reaction is [[Fe-S] cluster scaffold protein carrying a second [4Fe-4S](2+) cluster] + N(6)-octanoyl-L-lysyl-[protein] + 2 oxidized [2Fe-2S]-[ferredoxin] + 2 S-adenosyl-L-methionine + 4 H(+) = [[Fe-S] cluster scaffold protein] + N(6)-[(R)-dihydrolipoyl]-L-lysyl-[protein] + 4 Fe(3+) + 2 hydrogen sulfide + 2 5'-deoxyadenosine + 2 L-methionine + 2 reduced [2Fe-2S]-[ferredoxin]. The protein operates within protein modification; protein lipoylation via endogenous pathway; protein N(6)-(lipoyl)lysine from octanoyl-[acyl-carrier-protein]: step 2/2. Its function is as follows. Catalyzes the radical-mediated insertion of two sulfur atoms into the C-6 and C-8 positions of the octanoyl moiety bound to the lipoyl domains of lipoate-dependent enzymes, thereby converting the octanoylated domains into lipoylated derivatives. The chain is Lipoyl synthase from Synechococcus sp. (strain RCC307).